We begin with the raw amino-acid sequence, 425 residues long: Serine hydroxymethyltransferase (425 aa).

Residues leucine 124 and 128 to 130 (GHL) contribute to the (6S)-5,6,7,8-tetrahydrofolate site. N6-(pyridoxal phosphate)lysine is present on lysine 233.

It belongs to the SHMT family. Homodimer. The cofactor is pyridoxal 5'-phosphate.

The protein localises to the cytoplasm. It catalyses the reaction (6R)-5,10-methylene-5,6,7,8-tetrahydrofolate + glycine + H2O = (6S)-5,6,7,8-tetrahydrofolate + L-serine. It participates in one-carbon metabolism; tetrahydrofolate interconversion. It functions in the pathway amino-acid biosynthesis; glycine biosynthesis; glycine from L-serine: step 1/1. Its function is as follows. Catalyzes the reversible interconversion of serine and glycine with tetrahydrofolate (THF) serving as the one-carbon carrier. This reaction serves as the major source of one-carbon groups required for the biosynthesis of purines, thymidylate, methionine, and other important biomolecules. Also exhibits THF-independent aldolase activity toward beta-hydroxyamino acids, producing glycine and aldehydes, via a retro-aldol mechanism. The polypeptide is Serine hydroxymethyltransferase (Clavibacter sepedonicus (Clavibacter michiganensis subsp. sepedonicus)).